A 180-amino-acid chain; its full sequence is ATP synthase subunit delta (180 aa).

This sequence belongs to the ATPase delta chain family. In terms of assembly, F-type ATPases have 2 components, F(1) - the catalytic core - and F(0) - the membrane proton channel. F(1) has five subunits: alpha(3), beta(3), gamma(1), delta(1), epsilon(1). F(0) has three main subunits: a(1), b(2) and c(10-14). The alpha and beta chains form an alternating ring which encloses part of the gamma chain. F(1) is attached to F(0) by a central stalk formed by the gamma and epsilon chains, while a peripheral stalk is formed by the delta and b chains.

The protein resides in the cell inner membrane. Functionally, f(1)F(0) ATP synthase produces ATP from ADP in the presence of a proton or sodium gradient. F-type ATPases consist of two structural domains, F(1) containing the extramembraneous catalytic core and F(0) containing the membrane proton channel, linked together by a central stalk and a peripheral stalk. During catalysis, ATP synthesis in the catalytic domain of F(1) is coupled via a rotary mechanism of the central stalk subunits to proton translocation. In terms of biological role, this protein is part of the stalk that links CF(0) to CF(1). It either transmits conformational changes from CF(0) to CF(1) or is implicated in proton conduction. The chain is ATP synthase subunit delta from Cupriavidus metallidurans (strain ATCC 43123 / DSM 2839 / NBRC 102507 / CH34) (Ralstonia metallidurans).